The following is a 640-amino-acid chain: Threonine--tRNA ligase (640 aa).

One can recognise a TGS domain in the interval 1-61; it reads MPVITLPDGS…SNDATLQIIT (61 aa). The tract at residues 242–533 is catalytic; that stretch reads DHRKIGKQLD…LIEHYAGVFP (292 aa). 3 residues coordinate Zn(2+): Cys-333, His-384, and His-510.

Belongs to the class-II aminoacyl-tRNA synthetase family. As to quaternary structure, homodimer. Zn(2+) serves as cofactor.

The protein resides in the cytoplasm. It catalyses the reaction tRNA(Thr) + L-threonine + ATP = L-threonyl-tRNA(Thr) + AMP + diphosphate + H(+). Functionally, catalyzes the attachment of threonine to tRNA(Thr) in a two-step reaction: L-threonine is first activated by ATP to form Thr-AMP and then transferred to the acceptor end of tRNA(Thr). Also edits incorrectly charged L-seryl-tRNA(Thr). This is Threonine--tRNA ligase from Pseudomonas putida (strain GB-1).